Consider the following 240-residue polypeptide: Probable transcriptional activator (240 aa).

The interval 17–28 is essential for the oxygen-regulated activity; that stretch reads CTSCQARHGVVC. An HTH crp-type domain is found at 158–232; the sequence is RTAEEKVASL…FRHIIVPDMD (75 aa). The H-T-H motif DNA-binding region spans 191–210; it reads RAEIADFLGLTIETVSRQMT.

In terms of biological role, promotes the microaerobic and symbiotic induction of fixN, possibly by binding to the FNR consensus binding site upstream of fixN. This chain is Probable transcriptional activator (fnrN), found in Rhizobium leguminosarum bv. viciae.